The sequence spans 298 residues: Ethanolamine ammonia-lyase small subunit (298 aa).

Val-210, Glu-231, and Cys-261 together coordinate adenosylcob(III)alamin.

Belongs to the EutC family. As to quaternary structure, the basic unit is a heterodimer which dimerizes to form tetramers. The heterotetramers trimerize; 6 large subunits form a core ring with 6 small subunits projecting outwards. Adenosylcob(III)alamin serves as cofactor.

It localises to the bacterial microcompartment. It carries out the reaction ethanolamine = acetaldehyde + NH4(+). Its pathway is amine and polyamine degradation; ethanolamine degradation. Functionally, catalyzes the deamination of various vicinal amino-alcohols to oxo compounds. Allows this organism to utilize ethanolamine as the sole source of nitrogen and carbon in the presence of external vitamin B12. In Salmonella typhi, this protein is Ethanolamine ammonia-lyase small subunit.